The chain runs to 350 residues: Flap endonuclease 1 (350 aa).

An N-domain region spans residues 1 to 102 (MGVNLKDLIP…KEIEKRRKIR (102 aa)). Residues D31, D84, E156, E158, D177, D179, and D240 each coordinate Mg(2+). The I-domain stretch occupies residues 120–262 (AARRYAMMSA…KALQLVKAYK (143 aa)). Residues 341 to 349 (KQLGLEAWF) are interaction with PCNA.

Belongs to the XPG/RAD2 endonuclease family. FEN1 subfamily. Interacts with PCNA. PCNA stimulates the nuclease activity without altering cleavage specificity. It depends on Mg(2+) as a cofactor.

In terms of biological role, structure-specific nuclease with 5'-flap endonuclease and 5'-3' exonuclease activities involved in DNA replication and repair. During DNA replication, cleaves the 5'-overhanging flap structure that is generated by displacement synthesis when DNA polymerase encounters the 5'-end of a downstream Okazaki fragment. Binds the unpaired 3'-DNA end and kinks the DNA to facilitate 5' cleavage specificity. Cleaves one nucleotide into the double-stranded DNA from the junction in flap DNA, leaving a nick for ligation. Also involved in the base excision repair (BER) pathway. Acts as a genome stabilization factor that prevents flaps from equilibrating into structures that lead to duplications and deletions. Also possesses 5'-3' exonuclease activity on nicked or gapped double-stranded DNA. In Staphylothermus marinus (strain ATCC 43588 / DSM 3639 / JCM 9404 / F1), this protein is Flap endonuclease 1.